We begin with the raw amino-acid sequence, 217 residues long: Probable transaldolase (217 aa).

The active-site Schiff-base intermediate with substrate is K83.

This sequence belongs to the transaldolase family. Type 3B subfamily.

It is found in the cytoplasm. The catalysed reaction is D-sedoheptulose 7-phosphate + D-glyceraldehyde 3-phosphate = D-erythrose 4-phosphate + beta-D-fructose 6-phosphate. It participates in carbohydrate degradation; pentose phosphate pathway; D-glyceraldehyde 3-phosphate and beta-D-fructose 6-phosphate from D-ribose 5-phosphate and D-xylulose 5-phosphate (non-oxidative stage): step 2/3. In terms of biological role, transaldolase is important for the balance of metabolites in the pentose-phosphate pathway. The chain is Probable transaldolase from Brucella melitensis biotype 1 (strain ATCC 23456 / CCUG 17765 / NCTC 10094 / 16M).